The following is a 247-amino-acid chain: MSYDRAITVFSPDGHLFQVEYAQEAVRKGLCAVGVKGKDSIIFAVEKKSVQKLQDSRTTRKIYKLDEHIYLASAGLSADARVVVNHAQLECQRFRLSYEDAIDVDLLVRYVARVQQRSTQSSGSRPYGVSTIIGGFNENGQPQLWKTEPSGTSSAWNAAAIGRNDKVVLEFMEKNYQDGMTRDRCVHFAIKALLEAVESGSKNIELLVLERGKAAYMSDTELHRFVVEVEKEREEEAARRRRLAEED.

Belongs to the peptidase T1A family. The 26S proteasome consists of a 20S proteasome core and two 19S regulatory subunits. The 20S proteasome core is composed of 28 subunits that are arranged in four stacked rings, resulting in a barrel-shaped structure. The two end rings are each formed by seven alpha subunits, and the two central rings are each formed by seven beta subunits. The catalytic chamber with the active sites is on the inside of the barrel.

The protein resides in the cytoplasm. Its subcellular location is the nucleus. Its function is as follows. The proteasome is a multicatalytic proteinase complex which is characterized by its ability to cleave peptides with Arg, Phe, Tyr, Leu, and Glu adjacent to the leaving group at neutral or slightly basic pH. The proteasome has an ATP-dependent proteolytic activity. In Trypanosoma brucei brucei, this protein is Proteasome subunit alpha type-7 (PSA4).